Reading from the N-terminus, the 413-residue chain is Cardiolipin synthase B (413 aa).

PLD phosphodiesterase domains lie at 108 to 135 and 285 to 312; these read VFRR…SAEH and RRRP…DPLS. Residues H113, K115, D120, H290, K292, and D297 contribute to the active site. A disordered region spans residues 390 to 413; the sequence is VDPPAQPTMETQDRVETENTGVKP.

This sequence belongs to the phospholipase D family. Cardiolipin synthase subfamily. ClsB sub-subfamily.

Its subcellular location is the cell membrane. It catalyses the reaction 2 a 1,2-diacyl-sn-glycero-3-phospho-(1'-sn-glycerol) = a cardiolipin + glycerol. Catalyzes the phosphatidyl group transfer from one phosphatidylglycerol molecule to another to form cardiolipin (CL) (diphosphatidylglycerol) and glycerol. The protein is Cardiolipin synthase B of Escherichia coli O157:H7.